Consider the following 123-residue polypeptide: Small ribosomal subunit protein uS12 (123 aa).

The disordered stretch occupies residues 1–28 (MPTIQQLIRKPRQPKVKRSKSQHLESCP). Basic residues predominate over residues 9 to 21 (RKPRQPKVKRSKS). 3-methylthioaspartic acid is present on aspartate 89.

It belongs to the universal ribosomal protein uS12 family. In terms of assembly, part of the 30S ribosomal subunit. Contacts proteins S8 and S17. May interact with IF1 in the 30S initiation complex.

Its function is as follows. With S4 and S5 plays an important role in translational accuracy. In terms of biological role, interacts with and stabilizes bases of the 16S rRNA that are involved in tRNA selection in the A site and with the mRNA backbone. Located at the interface of the 30S and 50S subunits, it traverses the body of the 30S subunit contacting proteins on the other side and probably holding the rRNA structure together. The combined cluster of proteins S8, S12 and S17 appears to hold together the shoulder and platform of the 30S subunit. In Dinoroseobacter shibae (strain DSM 16493 / NCIMB 14021 / DFL 12), this protein is Small ribosomal subunit protein uS12.